Consider the following 239-residue polypeptide: MIKVLIVDDEPLARENLRIFLQEQSDIEIVGECSNAVEGIGAVHKLRPDVLFLDIQMPRISGLEMVGMLDPEHRPYIVFLTAFDEYAIKAFEEHAFDYLLKPIDEARLEKTLARLRQERSKQDVSLLPENQQALKFIPCTGHSRIYLLQMKDVAFVSSRMSGVYVTSHEGKEGFTELTLRTLESRTPLLRCHRQYLVNLAHLQEIRLEDNGQAELILRNGLTVPVSRRYLKSLKEAIGL.

The 114-residue stretch at 3 to 116 (KVLIVDDEPL…RLEKTLARLR (114 aa)) folds into the Response regulatory domain. Residue D54 is modified to 4-aspartylphosphate. In terms of domain architecture, HTH LytTR-type spans 137 to 239 (IPCTGHSRIY…LKSLKEAIGL (103 aa)).

In terms of processing, phosphorylated by BtsS.

Member of the two-component regulatory system BtsS/BtsR. BtsR regulates expression of btsT by binding to its promoter region. In Shigella flexneri, this protein is Transcriptional regulatory protein BtsR.